Consider the following 100-residue polypeptide: MIREERLLKVLKAPHISEKSTMVAEKQNTIVFKVAVDATKAEVKAAVAKLFEVEVETVRTLNMKGKTKRAGARVGRRSDWKKAYVTLKAGQDIDFMGAAE.

It belongs to the universal ribosomal protein uL23 family. Part of the 50S ribosomal subunit. Contacts protein L29, and trigger factor when it is bound to the ribosome.

Its function is as follows. One of the early assembly proteins it binds 23S rRNA. One of the proteins that surrounds the polypeptide exit tunnel on the outside of the ribosome. Forms the main docking site for trigger factor binding to the ribosome. The polypeptide is Large ribosomal subunit protein uL23 (Aeromonas hydrophila subsp. hydrophila (strain ATCC 7966 / DSM 30187 / BCRC 13018 / CCUG 14551 / JCM 1027 / KCTC 2358 / NCIMB 9240 / NCTC 8049)).